We begin with the raw amino-acid sequence, 590 residues long: Aspartate--tRNA(Asp/Asn) ligase (590 aa).

E175 provides a ligand contact to L-aspartate. An aspartate region spans residues Q199 to K202. 2 residues coordinate L-aspartate: R221 and H450. An ATP-binding site is contributed by R221–E223. E484 contacts ATP. R491 contributes to the L-aspartate binding site. G536 to R539 provides a ligand contact to ATP.

The protein belongs to the class-II aminoacyl-tRNA synthetase family. Type 1 subfamily. Homodimer.

The protein localises to the cytoplasm. It carries out the reaction tRNA(Asx) + L-aspartate + ATP = L-aspartyl-tRNA(Asx) + AMP + diphosphate. Aspartyl-tRNA synthetase with relaxed tRNA specificity since it is able to aspartylate not only its cognate tRNA(Asp) but also tRNA(Asn). Reaction proceeds in two steps: L-aspartate is first activated by ATP to form Asp-AMP and then transferred to the acceptor end of tRNA(Asp/Asn). This chain is Aspartate--tRNA(Asp/Asn) ligase, found in Nitrobacter hamburgensis (strain DSM 10229 / NCIMB 13809 / X14).